A 346-amino-acid polypeptide reads, in one-letter code: Cell division protein ZipA (346 aa).

The Periplasmic portion of the chain corresponds to 1 to 6; it reads MEDLQL. A helical membrane pass occupies residues 7-27; it reads VLFVLGAIAIVAVLVHGFWSI. Over 28–346 the chain is Cytoplasmic; that stretch reads RRQQPKSLKD…DYLHRIRANA (319 aa). Disordered stretches follow at residues 76–103 and 121–145; these read ANEA…QPVE and QPDF…RQEP.

It belongs to the ZipA family. Interacts with FtsZ via their C-terminal domains.

It localises to the cell inner membrane. Functionally, essential cell division protein that stabilizes the FtsZ protofilaments by cross-linking them and that serves as a cytoplasmic membrane anchor for the Z ring. Also required for the recruitment to the septal ring of downstream cell division proteins. The polypeptide is Cell division protein ZipA (Shewanella sp. (strain MR-4)).